Consider the following 170-residue polypeptide: ATP synthase F(1) complex subunit delta, mitochondrial (170 aa).

A mitochondrion-targeting transit peptide spans 1–33 (MIRSIIKSSNNLLKSNVAINSNKRFFATEASAT).

It belongs to the ATPase epsilon chain family. As to quaternary structure, component of the ATP synthase complex composed at least of ATP5F1A/subunit alpha, ATP5F1B/subunit beta, ATP5MC1/subunit c (homooctomer), MT-ATP6/subunit a, MT-ATP8/subunit 8, ATP5ME/subunit e, ATP5MF/subunit f, ATP5MG/subunit g, ATP5MK/subunit k, ATP5MJ/subunit j, ATP5F1C/subunit gamma, ATP5F1D/subunit delta, ATP5F1E/subunit epsilon, ATP5PF/subunit F6, ATP5PB/subunit b, ATP5PD/subunit d, ATP5PO/subunit OSCP. ATP synthase complex consists of a soluble F(1) head domain (subunits alpha(3) and beta(3)) - the catalytic core - and a membrane F(0) domain - the membrane proton channel (subunits c, a, 8, e, f, g, k and j). These two domains are linked by a central stalk (subunits gamma, delta, and epsilon) rotating inside the F1 region and a stationary peripheral stalk (subunits F6, b, d, and OSCP).

Its subcellular location is the mitochondrion. It localises to the mitochondrion inner membrane. Its function is as follows. Subunit delta, of the mitochondrial membrane ATP synthase complex (F(1)F(0) ATP synthase or Complex V) that produces ATP from ADP in the presence of a proton gradient across the membrane which is generated by electron transport complexes of the respiratory chain. ATP synthase complex consist of a soluble F(1) head domain - the catalytic core - and a membrane F(1) domain - the membrane proton channel. These two domains are linked by a central stalk rotating inside the F(1) region and a stationary peripheral stalk. During catalysis, ATP synthesis in the catalytic domain of F(1) is coupled via a rotary mechanism of the central stalk subunits to proton translocation. In vivo, can only synthesize ATP although its ATP hydrolase activity can be activated artificially in vitro. With the central stalk subunit gamma, is essential for the biogenesis of F(1) catalytic part of the ATP synthase complex namely in the formation of F1 assembly intermediate. This is ATP synthase F(1) complex subunit delta, mitochondrial from Dictyostelium discoideum (Social amoeba).